Reading from the N-terminus, the 123-residue chain is uncharacterized protein (123 aa).

The protein to M.tuberculosis Rv0477.

This is an uncharacterized protein from Mycobacterium leprae (strain TN).